Here is a 297-residue protein sequence, read N- to C-terminus: Probable endonuclease 4 (297 aa).

Zn(2+) contacts are provided by histidine 69, histidine 110, glutamate 145, aspartate 179, histidine 182, histidine 214, aspartate 227, histidine 229, and glutamate 259.

The protein belongs to the AP endonuclease 2 family. Zn(2+) serves as cofactor.

The catalysed reaction is Endonucleolytic cleavage to 5'-phosphooligonucleotide end-products.. Functionally, endonuclease IV plays a role in DNA repair. It cleaves phosphodiester bonds at apurinic or apyrimidinic (AP) sites, generating a 3'-hydroxyl group and a 5'-terminal sugar phosphate. This Listeria monocytogenes serovar 1/2a (strain ATCC BAA-679 / EGD-e) protein is Probable endonuclease 4.